The sequence spans 184 residues: Endoribonuclease YbeY (184 aa).

Composition is skewed to acidic residues over residues 1 to 11 (MTVEVGADENP) and 19 to 29 (DGAGDESDDED). A disordered region spans residues 1-37 (MTVEVGADENPDFAHDETDGAGDESDDEDAQGRDPEL). His146, His150, and His156 together coordinate Zn(2+).

This sequence belongs to the endoribonuclease YbeY family. Zn(2+) serves as cofactor.

Its subcellular location is the cytoplasm. Functionally, single strand-specific metallo-endoribonuclease involved in late-stage 70S ribosome quality control and in maturation of the 3' terminus of the 16S rRNA. This is Endoribonuclease YbeY from Burkholderia mallei (strain ATCC 23344).